A 307-amino-acid polypeptide reads, in one-letter code: 2-dehydropantoate 2-reductase (307 aa).

NADP(+) is bound by residues 7 to 12, Asn102, and Ala128; that span reads GSGAMG. Asn102 contributes to the substrate binding site. The active-site Proton donor is the Lys184. Positions 188, 192, and 255 each coordinate substrate. Residue Glu268 coordinates NADP(+).

It belongs to the ketopantoate reductase family.

The protein localises to the cytoplasm. It carries out the reaction (R)-pantoate + NADP(+) = 2-dehydropantoate + NADPH + H(+). Its pathway is cofactor biosynthesis; (R)-pantothenate biosynthesis; (R)-pantoate from 3-methyl-2-oxobutanoate: step 2/2. In terms of biological role, catalyzes the NADPH-dependent reduction of ketopantoate into pantoic acid. This is 2-dehydropantoate 2-reductase (apbA) from Streptococcus pyogenes serotype M1.